The primary structure comprises 389 residues: Flap endonuclease 1 (389 aa).

The N-domain stretch occupies residues 1–105 (MGIKGLTALL…GELAKRKDKR (105 aa)). Aspartate 34 provides a ligand contact to Mg(2+). Arginine 71 is a binding site for DNA. Aspartate 87, glutamate 159, glutamate 161, aspartate 180, and aspartate 182 together coordinate Mg(2+). The segment at 123-254 (EVEKLSKRTV…KTALKLIKEH (132 aa)) is I-domain. Residue glutamate 159 coordinates DNA. Positions 232 and 234 each coordinate DNA. Position 234 (aspartate 234) interacts with Mg(2+). The interaction with PCNA stretch occupies residues 338-346 (SQNRLESFF). Residues 356 to 389 (IGKRKVEETKSGKGSKAGLNKKSKGVSGYKSKKT) form a disordered region. The span at 374-389 (LNKKSKGVSGYKSKKT) shows a compositional bias: basic residues.

Belongs to the XPG/RAD2 endonuclease family. FEN1 subfamily. Interacts with PCNA. Three molecules of FEN1 bind to one PCNA trimer with each molecule binding to one PCNA monomer. PCNA stimulates the nuclease activity without altering cleavage specificity. Mg(2+) is required as a cofactor. Phosphorylated. Phosphorylation upon DNA damage induces relocalization to the nuclear plasma.

It localises to the nucleus. The protein localises to the nucleolus. Its subcellular location is the nucleoplasm. It is found in the mitochondrion. Structure-specific nuclease with 5'-flap endonuclease and 5'-3' exonuclease activities involved in DNA replication and repair. During DNA replication, cleaves the 5'-overhanging flap structure that is generated by displacement synthesis when DNA polymerase encounters the 5'-end of a downstream Okazaki fragment. It enters the flap from the 5'-end and then tracks to cleave the flap base, leaving a nick for ligation. Also involved in the long patch base excision repair (LP-BER) pathway, by cleaving within the apurinic/apyrimidinic (AP) site-terminated flap. Acts as a genome stabilization factor that prevents flaps from equilibrating into structures that lead to duplications and deletions. Also possesses 5'-3' exonuclease activity on nicked or gapped double-stranded DNA, and exhibits RNase H activity. Also involved in replication and repair of rDNA and in repairing mitochondrial DNA. The polypeptide is Flap endonuclease 1 (Ostreococcus tauri).